A 187-amino-acid chain; its full sequence is UPF0301 protein VC_0467 (187 aa).

It belongs to the UPF0301 (AlgH) family.

In Vibrio cholerae serotype O1 (strain ATCC 39315 / El Tor Inaba N16961), this protein is UPF0301 protein VC_0467.